Here is a 425-residue protein sequence, read N- to C-terminus: Dihydroorotase (425 aa).

Residues H56 and H58 each coordinate Zn(2+). Residues H58–R60 and N90 each bind substrate. D148, H175, and H228 together coordinate Zn(2+). Residue N274 coordinates substrate. D301 is a Zn(2+) binding site. The active site involves D301. Residues H305 and F319–G320 contribute to the substrate site.

This sequence belongs to the metallo-dependent hydrolases superfamily. DHOase family. Class I DHOase subfamily. Zn(2+) serves as cofactor.

The catalysed reaction is (S)-dihydroorotate + H2O = N-carbamoyl-L-aspartate + H(+). It functions in the pathway pyrimidine metabolism; UMP biosynthesis via de novo pathway; (S)-dihydroorotate from bicarbonate: step 3/3. Functionally, catalyzes the reversible cyclization of carbamoyl aspartate to dihydroorotate. The sequence is that of Dihydroorotase from Lactobacillus delbrueckii subsp. bulgaricus (strain ATCC BAA-365 / Lb-18).